The sequence spans 175 residues: Co-chaperone protein HscB homolog (175 aa).

A J domain is found at 7 to 79 (SHFDLFDLPA…LKRATYLLHL (73 aa)).

This sequence belongs to the HscB family. As to quaternary structure, interacts with HscA and stimulates its ATPase activity.

Its function is as follows. Co-chaperone involved in the maturation of iron-sulfur cluster-containing proteins. Seems to help targeting proteins to be folded toward HscA. The sequence is that of Co-chaperone protein HscB homolog from Paraburkholderia xenovorans (strain LB400).